Reading from the N-terminus, the 558-residue chain is Potassium-transporting ATPase potassium-binding subunit 2 (558 aa).

12 helical membrane passes run 1-21, 60-80, 129-149, 169-189, 246-266, 281-301, 326-346, 353-373, 376-396, 415-435, 485-505, and 523-543; these read MSIV…SRYL, IKHF…LLLI, VITF…IAML, FIVR…ISQG, WSNY…VFLF, IMIF…CLYF, FGIG…TGTV, LTPL…VFGG, VGLM…SLMI, IALS…LAFI, IVML…VSSL, and LFFS…TFLP.

It belongs to the KdpA family. As to quaternary structure, the system is composed of three essential subunits: KdpA, KdpB and KdpC.

It is found in the cell membrane. Functionally, part of the high-affinity ATP-driven potassium transport (or Kdp) system, which catalyzes the hydrolysis of ATP coupled with the electrogenic transport of potassium into the cytoplasm. This subunit binds the extracellular potassium ions and delivers the ions to the membrane domain of KdpB through an intramembrane tunnel. This chain is Potassium-transporting ATPase potassium-binding subunit 2, found in Staphylococcus aureus (strain Mu50 / ATCC 700699).